We begin with the raw amino-acid sequence, 62 residues long: MGMRMMFVVFLLVVFASSVTLDRASYGRYASPVDRASALIAQAILRDCCSNPPCAHNNPDCR.

Positions 1 to 18 (MGMRMMFVVFLLVVFASS) are cleaved as a signal peptide. Residues 19–45 (VTLDRASYGRYASPVDRASALIAQAIL) constitute a propeptide that is removed on maturation. Cystine bridges form between C48-C54 and C49-C61.

Belongs to the conotoxin A superfamily. In terms of processing, the toxin is inactive on the alpha-3-beta-2 nAChR when the disulfide bond connectivity is C1-C4 and C2-C3 (ViIA-I) (IC(50)&gt;10000 nM). Expressed by the venom duct.

It localises to the secreted. In terms of biological role, alpha-conotoxins act on postsynaptic membranes, they bind to the nicotinic acetylcholine receptors (nAChR) and thus inhibit them. This toxin selectively inhibits nicotinic acetylcholine receptor (nAChR) alpha-3-beta-2 subtype (IC(50)=845.5 nM). The protein is Alpha-conotoxin ViIA of Conus virgo (Virgin cone).